Here is a 660-residue protein sequence, read N- to C-terminus: MAMAGESSGKKIGDCDGKVAGNRQRKVGLIYDETMCKHDTPDGEDHPECPDRIRVIWEKLQLAGVSQRCVVLGSSKAEDKHLQLVHTKDHVNLVKSISTKQKDYRRNRIASQLNSIYLNGGSSEAAYLAAGSVVKLAEKVAEGELDCGFAIVRPPGHHAEADEAMGFCLFNNVAVAASFLLNERPDLGVKKILIVDWDVHHGNGTQKMFWKDPRVLFFSVHRHEYGGFYPAGDDGDYNMVGEGPGEGFNINVPWDQGRCGDADYLAAWDHILIPVAREFNPDVIFLSAGFDAAINDPLGGCCVTPYGYSVMLKKLMEFAQGKIVLALEGGYNLDSIAKSSLACVQVLLEDKQIQGPPEAYPFESTWRVIQAVRKRLCTYWPSLADELSWKLINQKTPTPIILISSSDSETEDNAQGLLDQMSKLSIENPQGTLLENHQVEPASTSWRADLAKVDVWYASFGSNMWKPRFLCYIQGGQVDGLKKVCVGSMDKSPPKETVWETFPHRLFFGRESSVGWGVGGVAFTNPLANLIDQTHMCLYRITLEQFNDVLSQENGLNVDSDSPVFDLAALQLVDNKGSILEAPLNSWYGNVVCLGKERDIPILTMTCTLSAVEKFKSGEIPIRPPAKAYANTLIRGLVEGGRLSKEEAEAYIDKAVSKPL.

N-acetylalanine is present on alanine 2. The tract at residues 26 to 349 (KVGLIYDETM…SLACVQVLLE (324 aa)) is histone deacetylase. Histidine 158 serves as the catalytic Proton donor/acceptor. Zn(2+)-binding residues include aspartate 198, histidine 200, and aspartate 291.

The protein belongs to the histone deacetylase family. HD type 2 subfamily. Interacts with HDA6. The cofactor is Zn(2+). In terms of tissue distribution, expressed in stems, leaves, flowers, siliques and mature seeds.

Its subcellular location is the nucleus. The protein localises to the cytoplasm. It carries out the reaction N(6)-acetyl-L-lysyl-[histone] + H2O = L-lysyl-[histone] + acetate. Inhibited by trichostatin A (TSA), a well-known histone deacetylase inhibitor. Responsible for the deacetylation of lysine residues on the N-terminal part of the core histones (H2A, H2B, H3 and H4). Histone deacetylation gives a tag for epigenetic repression and plays an important role in transcriptional regulation, cell cycle progression and developmental events. Histone deacetylases act via the formation of large multiprotein complexes. Involved in the regulation of flowering time by repressing FLC and AGL27/MAF1 expression. Forms a histone deacetylase complex with HDA6, FLD and MSI4/FVE that represses FLC gene expression to control flowering time. Unlike its tandem duplication HDA18, HDA5 does not seem to be required for the cellular patterning in the root epidermis. The sequence is that of Histone deacetylase 5 from Arabidopsis thaliana (Mouse-ear cress).